Reading from the N-terminus, the 213-residue chain is A-type ATP synthase subunit D (213 aa).

It belongs to the V-ATPase D subunit family. Has multiple subunits with at least A(3), B(3), C, D, E, F, H, I and proteolipid K(x).

It is found in the cell membrane. In terms of biological role, component of the A-type ATP synthase that produces ATP from ADP in the presence of a proton gradient across the membrane. The sequence is that of A-type ATP synthase subunit D from Saccharolobus islandicus (strain Y.N.15.51 / Yellowstone #2) (Sulfolobus islandicus).